The chain runs to 312 residues: Nicotinamide adenine dinucleotide transporter 1, chloroplastic (312 aa).

3 Solcar repeats span residues 11-103, 111-199, and 211-299; these read KNVL…LKSF, LSVG…IKVY, and LNAR…VHRF. The next 6 membrane-spanning stretches (helical) occupy residues 17–37, 78–98, 117–137, 171–191, 216–232, and 271–293; these read AAAG…LDVI, GLSP…TMYD, VLAA…LWVV, GLYS…IQFP, VAVA…TLTY, and FYRG…FTSF.

It belongs to the mitochondrial carrier (TC 2.A.29) family. As to expression, highly expressed in young leaf mesophyll cells, root tips and at the branches of adventitious roots. Low expression in all flower tissues and not detected in siliques and seeds.

Its subcellular location is the plastid. It is found in the chloroplast membrane. Its activity is regulated as follows. Inhibited by pyridoxal 5'-phosphate, bathophenanthroline, tannic acid, mersalyl, mercuric chloride, p-hydroxymercuribenzoate, p-hydroxymercuribenzoate sulfonate, bromocresol purple and N-ethylmaleimide. Functionally, mediates the NAD(+) import into chloroplast. Favors the NAD(+)(in)/ADP or AMP(out) antiport exchange, but is also able to catalyze a low unidirectional transport (uniport) of NAD(+). Transports NAD(+), nicotinic acid adenine dinucleotide, nicotinamide mononucleotide, nicotinic acid mononucleotide, FAD, FMN, TTP, TDP, TMP, UTP, UDP, UMP, CTP, CDP, CMP, GTP, GDP, GMP, 3'-AMP, ATP, ADP, and AMP, has low transport activity with cAMP, pyrophosphate, NADH and alpha-NAD(+), and has no activity with NADP(+), NADPH, nicotinamide, nicotinic acid, adenosine, thiamine mono- or diphosphate, inorganic phosphate, CoA, folate, NaCl, malate, malonate, citrate, fumarate, aspartate, glutamate, S-adenosylmethionine, lysine, arginine, and ornithine. The protein is Nicotinamide adenine dinucleotide transporter 1, chloroplastic (NDT1) of Arabidopsis thaliana (Mouse-ear cress).